The sequence spans 291 residues: D-alanyl-D-alanine carboxypeptidase DacB2 (291 aa).

The signal sequence occupies residues 1 to 22 (MRKLMTATAALCACAVTVSAGA). Ser-69 acts as the Acyl-ester intermediate in catalysis. Lys-72 functions as the Proton acceptor in the catalytic mechanism. The active site involves Ser-124.

The protein belongs to the peptidase S11 family.

It is found in the periplasm. It participates in cell wall biogenesis; peptidoglycan biosynthesis. Inhibited by the beta-lactam antibiotic meropenem. Inhibited by the non-specific inhibitor phenylmethylsulfonyl fluoride (PMSF). Probably cleaves the terminal D-Ala-D-Ala dipeptide of the peptidoglycan stem peptide. Shows significant D,D-carboxypeptidase activity in vitro. Acts on the synthetic penta-peptide substrate Penta-DAP (L-Ala-gamma-D-Gln-DAP-D-Ala-D-Ala). Also shows weak activity on Penta-Lys (L-Ala-gamma-Glu-L-Lys-D-Ala-D-Ala). The catalytic domain binds weakly to peptidoglycan in vitro. Plays an important role in the maintenance of colony morphology and cell wall permeability and integrity. The sequence is that of D-alanyl-D-alanine carboxypeptidase DacB2 from Mycobacterium tuberculosis (strain ATCC 25618 / H37Rv).